Reading from the N-terminus, the 339-residue chain is Leucine-rich repeat-containing protein 75A (339 aa).

The tract at residues 1–25 (MGTRQTKGSLAERASPGAAPGPRRE) is disordered. Residues 11-21 (AERASPGAAPG) are compositionally biased toward low complexity. LRR repeat units follow at residues 203–216 (VDSV…LTDD) and 228–241 (LPRL…GNRL). Residues 294–339 (LPTILELGEGPGTGEEAREGTDQQDPIGSPVTPARGQESTECVIQT) form a disordered region. Ser-322 carries the post-translational modification Phosphoserine. Phosphothreonine is present on Thr-325. The segment covering 330–339 (QESTECVIQT) has biased composition (polar residues).

It belongs to the LRRC75 family.

The sequence is that of Leucine-rich repeat-containing protein 75A (Lrrc75a) from Mus musculus (Mouse).